A 70-amino-acid polypeptide reads, in one-letter code: Conotoxin Lt11.2 (70 aa).

Residues 1–26 form the signal peptide; the sequence is MMFRLTSVSCFLLFIVFLNLVVLTNA. Disulfide bonds link Cys-27-Cys-41, Cys-34-Cys-46, Cys-40-Cys-50, and Cys-45-Cys-54. Proline amide is present on Pro-57. A propeptide spanning residues 61–70 is cleaved from the precursor; that stretch reads EKLQEFFRQR.

Belongs to the conotoxin I2 superfamily. As to expression, expressed by the venom duct.

It localises to the secreted. This chain is Conotoxin Lt11.2, found in Conus litteratus (Lettered cone).